A 654-amino-acid polypeptide reads, in one-letter code: Translation factor GUF1, mitochondrial (654 aa).

A tr-type G domain is found at 57–237 (ENYRNFSIVA…SVIKNIPSPV (181 aa)). GTP contacts are provided by residues 66–73 (AHVDHGKS), 130–134 (DTPGH), and 184–187 (NKID).

It belongs to the TRAFAC class translation factor GTPase superfamily. Classic translation factor GTPase family. LepA subfamily.

It is found in the mitochondrion inner membrane. It catalyses the reaction GTP + H2O = GDP + phosphate + H(+). Promotes mitochondrial protein synthesis. May act as a fidelity factor of the translation reaction, by catalyzing a one-codon backward translocation of tRNAs on improperly translocated ribosomes. Binds to mitochondrial ribosomes in a GTP-dependent manner. The protein is Translation factor GUF1, mitochondrial of Candida albicans (strain WO-1) (Yeast).